A 969-amino-acid chain; its full sequence is Endogenous retrovirus group K member 11 Pol protein (969 aa).

A Reverse transcriptase domain is found at 57-245 (LEKGHIEPSF…TPFHYLGMQI (189 aa)). The LPQG motif lies at 161–164 (LPQG). In terms of domain architecture, RNase H type-1 spans 460–590 (LENALTVFTD…ADLLVSSALI (131 aa)). Residues Asp-469, Glu-497, Asp-517, and Asp-582 each contribute to the Mg(2+) site. The segment at 587 to 628 (SALIKAQELHALTHVNAAGLKNKFDVTWKQAKDIVQHCTQCQ) adopts an Integrase-type zinc-finger fold. 4 residues coordinate Zn(2+): His-596, His-600, Cys-624, and Cys-627. The 162-residue stretch at 642–803 (RGLCPNALWQ…TSAEQHLTGK (162 aa)) folds into the Integrase catalytic domain. The segment at residues 811–859 (KLIWWKDNKNKTWEIGKVITWGRGFACVSPGENQLPVWIPTRHLKFYNE) is a DNA-binding region (integrase-type).

Belongs to the beta type-B retroviral polymerase family. HERV class-II K(HML-2) pol subfamily.

It carries out the reaction DNA(n) + a 2'-deoxyribonucleoside 5'-triphosphate = DNA(n+1) + diphosphate. It catalyses the reaction Endonucleolytic cleavage to 5'-phosphomonoester.. Early post-infection, the reverse transcriptase converts the viral RNA genome into double-stranded viral DNA. The RNase H domain of the reverse transcriptase performs two functions. It degrades the RNA template and specifically removes the RNA primer from the RNA/DNA hybrid. Following nuclear import, the integrase catalyzes the insertion of the linear, double-stranded viral DNA into the host cell chromosome. Endogenous Pol proteins may have kept, lost or modified their original function during evolution. The protein is Endogenous retrovirus group K member 11 Pol protein (ERVK-11) of Homo sapiens (Human).